We begin with the raw amino-acid sequence, 709 residues long: MRFLLRLPQIHFRKLSCSMSVLMGSKQFLEFCLLPSFASYPSSPSYSSSRQVSSVSRRFRPVLASRPVSKNSPYYQRTNGLSSYNSIPRVPTPVDTEVEADKRVVLSRLVTLRRKLAEQGVDAENCPPGQHSGLICPTCEGGNSGEKSLSLFIAPDGSSATWNCFRGKCGLKGGVRADGGLASADPIEKVERKITVEGIELEPLCDEIQDYFAARAISRKTLERNRVMQKRIGDEIVIAFTYWQRGELVSCKYRSLTKMFFQERKTRRILYGLDDIEKTSEVIIVEGEIDKLAMEEAGFLNCVSVPDGAPAKVSSKEIPSEDKDTKYKFLWNCNDYLKKASRIVIATDGDGPGQAMAEEIARRLGKERCWRVKWPKKSEDEHFKDANEVLMSKGPHLLKEAILDAEPYPILGLFSFKDFFDEIDAYYDRTHGHEYGVSTGWKNLDNLYSVVPGELTVVTGIPNSGKSEWIDAMLCNLNHSVGWKFALCSMENKVRDHARKLLEKHIKKPFFDADYGRSVQRMSVEEKDEGKKWLNDTFYPIRCEMDSLPSIDWVLERAKAAVLRYGIRGLVIDPYNELDHQRTPRQTETEYVSQMLTKIKRFSQHHSCHVWFVAHPKQLQHWDGGAPNLYDISGSAHFINKCDNGIIVHRNRDENAGPLDLVQIGVRKVRNKVAGQIGDAYLCYDRTTGSYSDSPVTPGMPERRSPKRY.

Residues 1-16 (MRFLLRLPQIHFRKLS) constitute a chloroplast and mitochondrion transit peptide. The Toprim domain maps to 280 to 385 (SEVIIVEGEI…KKSEDEHFKD (106 aa)). Positions 286, 348, and 350 each coordinate Mg(2+). An SF4 helicase domain is found at 430 to 698 (THGHEYGVST…GSYSDSPVTP (269 aa)). Position 460 to 467 (460 to 467 (GIPNSGKS)) interacts with ATP.

Mg(2+) serves as cofactor. Expressed in young leaves and shoot apex tissues. Detected in developing tissues such as cotyledons, sepals, pistils and inflorescences. Nearly undetectable in mature leaves.

The protein localises to the plastid. It is found in the chloroplast. It localises to the mitochondrion. It carries out the reaction ATP + H2O = ADP + phosphate + H(+). Functionally, has both DNA primase and DNA helicase activities and may be involved in organelle DNA replication. Capable of producing RNA primers of 9 to 18 bases from a single-stranded DNA template. The polypeptide is Twinkle homolog protein, chloroplastic/mitochondrial (Arabidopsis thaliana (Mouse-ear cress)).